A 518-amino-acid polypeptide reads, in one-letter code: MEDKDITSVNEKEVNENTNPRIIKYDAERRATRTETSKKDKWKNIVTIIASGFALISDGYVNGSMSMLNKVFVMEYGKKNYSSKVSTRVSNAALVGIIFGQFFMGIAADYYSRKSCILVATAILVIGSALCAASHGTTVPGMFWMLTVMRGLVGIGVGAEYPTSTLSANESANEYTTTKRGGILVMVTNLPLAFGGPFATIIFLIVYKICSGTKHLEAIWRTVFAIGCFWPLSVFYFRWKTATTEVYEKGRIKRNIPYFLALKFYWKRLLGTCGTWFMYDFVTFPNGIFSSTIISSVIKDQNDLVKVAEWNLLLGVLAVLGVPIGAYLSDRIGRKYTLMFGFSGYIIFGLIIGCAYDQLKKITPLFIIFYAFMNMLGNAGPGDMLGVISSEASATAVRGVFYGLSAVTGKIGSVVGVECFQPIRDNLGARWTFIIAAICGLIGIIITYFFVPHSLESDLMKQDVEFHNYLVSNGWTGKMGFDETDEESMVRTIEVEENGTNCSKKNAEIISVRQVDQS.

The Cytoplasmic segment spans residues 1-44 (MEDKDITSVNEKEVNENTNPRIIKYDAERRATRTETSKKDKWKN). Residues 45 to 65 (IVTIIASGFALISDGYVNGSM) traverse the membrane as a helical segment. The Extracellular portion of the chain corresponds to 66–91 (SMLNKVFVMEYGKKNYSSKVSTRVSN). N-linked (GlcNAc...) asparagine glycosylation is present at asparagine 80. A helical membrane pass occupies residues 92-112 (AALVGIIFGQFFMGIAADYYS). Over 113 to 114 (RK) the chain is Cytoplasmic. The chain crosses the membrane as a helical span at residues 115-136 (SCILVATAILVIGSALCAASHG). Residues 137-138 (TT) are Extracellular-facing. The chain crosses the membrane as a helical span at residues 139–159 (VPGMFWMLTVMRGLVGIGVGA). Topologically, residues 160–184 (EYPTSTLSANESANEYTTTKRGGIL) are cytoplasmic. Residues 185-205 (VMVTNLPLAFGGPFATIIFLI) traverse the membrane as a helical segment. Residues 206–216 (VYKICSGTKHL) lie on the Extracellular side of the membrane. Residues 217–237 (EAIWRTVFAIGCFWPLSVFYF) traverse the membrane as a helical segment. Residues 238-268 (RWKTATTEVYEKGRIKRNIPYFLALKFYWKR) are Cytoplasmic-facing. Residues 269–289 (LLGTCGTWFMYDFVTFPNGIF) traverse the membrane as a helical segment. Residues 290 to 306 (SSTIISSVIKDQNDLVK) lie on the Extracellular side of the membrane. A helical membrane pass occupies residues 307 to 327 (VAEWNLLLGVLAVLGVPIGAY). At 328 to 335 (LSDRIGRK) the chain is on the cytoplasmic side. A helical membrane pass occupies residues 336-356 (YTLMFGFSGYIIFGLIIGCAY). Residues 357-360 (DQLK) are Extracellular-facing. The helical transmembrane segment at 361 to 381 (KITPLFIIFYAFMNMLGNAGP) threads the bilayer. Topologically, residues 382–399 (GDMLGVISSEASATAVRG) are cytoplasmic. The helical transmembrane segment at 400–420 (VFYGLSAVTGKIGSVVGVECF) threads the bilayer. Residues 421 to 430 (QPIRDNLGAR) are Extracellular-facing. Residues 431-451 (WTFIIAAICGLIGIIITYFFV) form a helical membrane-spanning segment. At 452 to 518 (PHSLESDLMK…IISVRQVDQS (67 aa)) the chain is on the cytoplasmic side.

It belongs to the major facilitator superfamily. Sugar transporter (TC 2.A.1.1) family.

It is found in the cell membrane. The enzyme catalyses sn-glycerol 3-phosphocholine(out) = sn-glycerol 3-phosphocholine(in). It catalyses the reaction sn-glycero-3-phospho-1D-myo-inositol(out) = sn-glycero-3-phospho-1D-myo-inositol(in). Functionally, glycerophosphodiester transporter that mediates uptake of both glycerophosphoinositol (GroPIns) and glycerophosphocholine (GroPCho) as sources of the nutrients inositol and phosphate. This chain is Glycerophosphoinositol transporter 1, found in Saccharomyces cerevisiae (strain ATCC 204508 / S288c) (Baker's yeast).